The chain runs to 148 residues: Transcriptional repressor NrdR (148 aa).

The segment at 3–32 (CPKCSSEESKVVDSRQAEDAIRRRRVCESC) is a zinc-finger region. One can recognise an ATP-cone domain in the interval 47 to 137 (LLVIKKDDKR…VYRSFKDVSE (91 aa)).

The protein belongs to the NrdR family. Zn(2+) serves as cofactor.

Negatively regulates transcription of bacterial ribonucleotide reductase nrd genes and operons by binding to NrdR-boxes. In Lactococcus lactis subsp. lactis (strain IL1403) (Streptococcus lactis), this protein is Transcriptional repressor NrdR.